Here is a 213-residue protein sequence, read N- to C-terminus: Kynurenine formamidase (213 aa).

Residue tryptophan 15 coordinates substrate. Residues histidine 45, histidine 49, and aspartate 51 each coordinate Zn(2+). The active-site Proton donor/acceptor is the histidine 55. Residues histidine 157 and glutamate 169 each contribute to the Zn(2+) site.

Belongs to the Cyclase 1 superfamily. KynB family. As to quaternary structure, homodimer. Zn(2+) is required as a cofactor.

The catalysed reaction is N-formyl-L-kynurenine + H2O = L-kynurenine + formate + H(+). The protein operates within amino-acid degradation; L-tryptophan degradation via kynurenine pathway; L-kynurenine from L-tryptophan: step 2/2. Its function is as follows. Catalyzes the hydrolysis of N-formyl-L-kynurenine to L-kynurenine, the second step in the kynurenine pathway of tryptophan degradation. In Deinococcus geothermalis (strain DSM 11300 / CIP 105573 / AG-3a), this protein is Kynurenine formamidase.